The sequence spans 487 residues: Protein nucleotidyltransferase YdiU (487 aa).

Positions 90, 92, 93, 113, 125, 126, 176, and 183 each coordinate ATP. The Proton acceptor role is filled by aspartate 252. Asparagine 253 and aspartate 262 together coordinate Mg(2+). ATP is bound at residue aspartate 262.

Belongs to the SELO family. Requires Mg(2+) as cofactor. It depends on Mn(2+) as a cofactor.

The enzyme catalyses L-seryl-[protein] + ATP = 3-O-(5'-adenylyl)-L-seryl-[protein] + diphosphate. It carries out the reaction L-threonyl-[protein] + ATP = 3-O-(5'-adenylyl)-L-threonyl-[protein] + diphosphate. The catalysed reaction is L-tyrosyl-[protein] + ATP = O-(5'-adenylyl)-L-tyrosyl-[protein] + diphosphate. It catalyses the reaction L-histidyl-[protein] + UTP = N(tele)-(5'-uridylyl)-L-histidyl-[protein] + diphosphate. The enzyme catalyses L-seryl-[protein] + UTP = O-(5'-uridylyl)-L-seryl-[protein] + diphosphate. It carries out the reaction L-tyrosyl-[protein] + UTP = O-(5'-uridylyl)-L-tyrosyl-[protein] + diphosphate. Nucleotidyltransferase involved in the post-translational modification of proteins. It can catalyze the addition of adenosine monophosphate (AMP) or uridine monophosphate (UMP) to a protein, resulting in modifications known as AMPylation and UMPylation. In Pseudomonas savastanoi pv. phaseolicola (strain 1448A / Race 6) (Pseudomonas syringae pv. phaseolicola (strain 1448A / Race 6)), this protein is Protein nucleotidyltransferase YdiU.